An 80-amino-acid chain; its full sequence is Exodeoxyribonuclease 7 small subunit (80 aa).

The protein belongs to the XseB family. In terms of assembly, heterooligomer composed of large and small subunits.

The protein resides in the cytoplasm. The enzyme catalyses Exonucleolytic cleavage in either 5'- to 3'- or 3'- to 5'-direction to yield nucleoside 5'-phosphates.. Functionally, bidirectionally degrades single-stranded DNA into large acid-insoluble oligonucleotides, which are then degraded further into small acid-soluble oligonucleotides. The sequence is that of Exodeoxyribonuclease 7 small subunit from Pseudomonas putida (strain W619).